Here is a 289-residue protein sequence, read N- to C-terminus: Polyamine aminopropyltransferase (289 aa).

The 234-residue stretch at 5–238 (TVWHETLHDQ…GIMTFAWATD (234 aa)) folds into the PABS domain. Gln-33 is an S-methyl-5'-thioadenosine binding site. Residues His-64 and Asp-88 each contribute to the spermidine site. S-methyl-5'-thioadenosine is bound by residues Glu-108 and 140 to 141 (DG). Asp-158 serves as the catalytic Proton acceptor. 158–161 (DCTD) provides a ligand contact to spermidine. Pro-165 is a binding site for S-methyl-5'-thioadenosine.

It belongs to the spermidine/spermine synthase family. In terms of assembly, homodimer or homotetramer.

It is found in the cytoplasm. It catalyses the reaction S-adenosyl 3-(methylsulfanyl)propylamine + putrescine = S-methyl-5'-thioadenosine + spermidine + H(+). Its pathway is amine and polyamine biosynthesis; spermidine biosynthesis; spermidine from putrescine: step 1/1. Functionally, catalyzes the irreversible transfer of a propylamine group from the amino donor S-adenosylmethioninamine (decarboxy-AdoMet) to putrescine (1,4-diaminobutane) to yield spermidine. This chain is Polyamine aminopropyltransferase, found in Enterobacter sp. (strain 638).